A 344-amino-acid chain; its full sequence is N-acetyl-gamma-glutamyl-phosphate reductase (344 aa).

Residue C148 is part of the active site.

It belongs to the NAGSA dehydrogenase family. Type 1 subfamily.

It localises to the cytoplasm. It carries out the reaction N-acetyl-L-glutamate 5-semialdehyde + phosphate + NADP(+) = N-acetyl-L-glutamyl 5-phosphate + NADPH + H(+). The protein operates within amino-acid biosynthesis; L-arginine biosynthesis; N(2)-acetyl-L-ornithine from L-glutamate: step 3/4. Functionally, catalyzes the NADPH-dependent reduction of N-acetyl-5-glutamyl phosphate to yield N-acetyl-L-glutamate 5-semialdehyde. The protein is N-acetyl-gamma-glutamyl-phosphate reductase of Geobacillus thermodenitrificans (strain NG80-2).